Consider the following 417-residue polypeptide: Tyrosine--tRNA ligase (417 aa).

An L-tyrosine-binding site is contributed by tyrosine 39. A 'HIGH' region motif is present at residues 44–53 (PTASSLHAGS). L-tyrosine is bound by residues tyrosine 176 and glutamine 180. The 'KMSKS' region signature appears at 236–240 (KMGKS). ATP is bound at residue lysine 239. The S4 RNA-binding domain maps to 350 to 417 (TGLLILLVQA…KKKHVLIKPL (68 aa)).

This sequence belongs to the class-I aminoacyl-tRNA synthetase family. TyrS type 1 subfamily. In terms of assembly, homodimer.

Its subcellular location is the cytoplasm. It carries out the reaction tRNA(Tyr) + L-tyrosine + ATP = L-tyrosyl-tRNA(Tyr) + AMP + diphosphate + H(+). Its function is as follows. Catalyzes the attachment of tyrosine to tRNA(Tyr) in a two-step reaction: tyrosine is first activated by ATP to form Tyr-AMP and then transferred to the acceptor end of tRNA(Tyr). This is Tyrosine--tRNA ligase from Bartonella henselae (strain ATCC 49882 / DSM 28221 / CCUG 30454 / Houston 1) (Rochalimaea henselae).